Consider the following 418-residue polypeptide: Dual-specificity RNA methyltransferase RlmN (418 aa).

The tract at residues 1 to 21 is disordered; sequence MADTSLMPIPGQVDPVPAPRD. The active-site Proton acceptor is Glu-122. The Radical SAM core domain maps to 128 to 383; sequence DADRGTLCVS…APVRTPRGRD (256 aa). Cys-135 and Cys-388 are joined by a disulfide. [4Fe-4S] cluster-binding residues include Cys-142, Cys-146, and Cys-149. Residues 212–213, Ser-244, 266–268, and Asn-345 contribute to the S-adenosyl-L-methionine site; these read GE and SLH. Cys-388 acts as the S-methylcysteine intermediate in catalysis. Residues 393–418 form a disordered region; the sequence is TAAQKKSRAERDREAAAEAEAAASQA. The span at 399 to 408 shows a compositional bias: basic and acidic residues; sequence SRAERDREAA.

This sequence belongs to the radical SAM superfamily. RlmN family. The cofactor is [4Fe-4S] cluster.

Its subcellular location is the cytoplasm. It carries out the reaction adenosine(2503) in 23S rRNA + 2 reduced [2Fe-2S]-[ferredoxin] + 2 S-adenosyl-L-methionine = 2-methyladenosine(2503) in 23S rRNA + 5'-deoxyadenosine + L-methionine + 2 oxidized [2Fe-2S]-[ferredoxin] + S-adenosyl-L-homocysteine. The enzyme catalyses adenosine(37) in tRNA + 2 reduced [2Fe-2S]-[ferredoxin] + 2 S-adenosyl-L-methionine = 2-methyladenosine(37) in tRNA + 5'-deoxyadenosine + L-methionine + 2 oxidized [2Fe-2S]-[ferredoxin] + S-adenosyl-L-homocysteine. Functionally, specifically methylates position 2 of adenine 2503 in 23S rRNA and position 2 of adenine 37 in tRNAs. m2A2503 modification seems to play a crucial role in the proofreading step occurring at the peptidyl transferase center and thus would serve to optimize ribosomal fidelity. This Erythrobacter litoralis (strain HTCC2594) protein is Dual-specificity RNA methyltransferase RlmN.